The primary structure comprises 376 residues: Chaperone protein DnaJ (376 aa).

In terms of domain architecture, J spans 5–70 (DYYEVLGVAR…NKRRMYDSHG (66 aa)). The CR-type zinc finger occupies 132-209 (GVERRIEIPT…CHGNGRVEED (78 aa)). Cysteine 145, cysteine 148, cysteine 161, cysteine 164, cysteine 183, cysteine 186, cysteine 197, and cysteine 200 together coordinate Zn(2+). CXXCXGXG motif repeat units follow at residues 145 to 152 (CGDCDGSG), 161 to 168 (CNVCHGRG), 183 to 190 (CHNCGGRG), and 197 to 204 (CKTCHGNG). Residues 223-242 (GDRIRLSGEGEAGPAGTPPG) are disordered.

The protein belongs to the DnaJ family. In terms of assembly, homodimer. Zn(2+) serves as cofactor.

It localises to the cytoplasm. Participates actively in the response to hyperosmotic and heat shock by preventing the aggregation of stress-denatured proteins and by disaggregating proteins, also in an autonomous, DnaK-independent fashion. Unfolded proteins bind initially to DnaJ; upon interaction with the DnaJ-bound protein, DnaK hydrolyzes its bound ATP, resulting in the formation of a stable complex. GrpE releases ADP from DnaK; ATP binding to DnaK triggers the release of the substrate protein, thus completing the reaction cycle. Several rounds of ATP-dependent interactions between DnaJ, DnaK and GrpE are required for fully efficient folding. Also involved, together with DnaK and GrpE, in the DNA replication of plasmids through activation of initiation proteins. This Stenotrophomonas maltophilia (strain R551-3) protein is Chaperone protein DnaJ.